The primary structure comprises 116 residues: UPF0134 protein MPN_038 (116 aa).

It belongs to the UPF0134 family.

This is UPF0134 protein MPN_038 from Mycoplasma pneumoniae (strain ATCC 29342 / M129 / Subtype 1) (Mycoplasmoides pneumoniae).